Here is a 1388-residue protein sequence, read N- to C-terminus: Endoribonuclease Dicer homolog 2 (1388 aa).

The 180-residue stretch at 31–210 (ALEKAIKQNT…DSYWKKIHEL (180 aa)) folds into the Helicase ATP-binding domain. 44-51 (LETGSGKT) is an ATP binding site. Positions 152–155 (DECH) match the DECH box motif. A Helicase C-terminal domain is found at 380–544 (LGYSSLENIR…PLPDDSDEPL (165 aa)). The region spanning 559 to 645 (SVSLIYHYCS…VPDMVVAETV (87 aa)) is the Dicer dsRNA-binding fold domain. The PAZ domain occupies 805–935 (TSHEVLEKHE…LPPELCHVIL (131 aa)). RNase III domains are found at residues 962 to 1113 (AYNL…SEGG) and 1149 to 1296 (VGYM…VDSG). 3 residues coordinate Mg(2+): Glu1188, Asp1282, and Glu1285. Positions 1315-1384 (TPETVKLHPV…YKEVLNLLKN (70 aa)) constitute a DRBM domain.

This sequence belongs to the helicase family. Dicer subfamily. Mg(2+) is required as a cofactor. It depends on Mn(2+) as a cofactor.

It is found in the nucleus. Its subcellular location is the cytoplasm. Its function is as follows. Ribonuclease (RNase) III involved in RNA-mediated post-transcriptional gene silencing (PTGS). Involved in the processing of natural small interfering RNAs (nat-siRNAs, derived from cis-natural antisense transcripts) by cleaving small dsRNAs into 24 nucleotide nat-siRNAs. Plays an essential role in transitive silencing of transgenes by processing secondary siRNAs. This pathway, which requires DCL4 and RDR6, amplifies silencing by using the target RNA as substrate to generate secondary siRNAs, providing an efficient mechanism for long-distance silencing. May participate with DCL3 in the production of 24 nucleotide repeat-associated siRNAs (ra-siRNAs) which derive from heterochromatin and DNA repeats such as transposons. Plays a role in antiviral RNA silencing. Involved in the production of viral siRNAs derived from the turnip crinkle virus (TCV) and tobacco rattle virus (TRV). Targeted by the viral silencing suppressor (VSR) protein 2b of the cucumber mosaic virus (CMV) that inactivates DCL2 function in RNA silencing. Does not seem to be involved in microRNAs (miRNAs) processing. The sequence is that of Endoribonuclease Dicer homolog 2 from Arabidopsis thaliana (Mouse-ear cress).